The following is a 440-amino-acid chain: Adenylosuccinate synthetase (440 aa).

GTP-binding positions include 13 to 19 (GDEGKGK) and 41 to 43 (GHT). The active-site Proton acceptor is the D14. Mg(2+)-binding residues include D14 and G41. IMP contacts are provided by residues 14–17 (DEGK), 39–42 (NAGH), T135, R149, Q230, T245, and R313. The Proton donor role is filled by H42. Residue 309 to 315 (TVTKRKR) participates in substrate binding. GTP-binding positions include R315, 341–343 (KLD), and 423–425 (STG).

Belongs to the adenylosuccinate synthetase family. Homodimer. It depends on Mg(2+) as a cofactor.

The protein resides in the cytoplasm. It carries out the reaction IMP + L-aspartate + GTP = N(6)-(1,2-dicarboxyethyl)-AMP + GDP + phosphate + 2 H(+). Its pathway is purine metabolism; AMP biosynthesis via de novo pathway; AMP from IMP: step 1/2. In terms of biological role, plays an important role in the de novo pathway of purine nucleotide biosynthesis. Catalyzes the first committed step in the biosynthesis of AMP from IMP. The chain is Adenylosuccinate synthetase from Methylobacillus flagellatus (strain ATCC 51484 / DSM 6875 / VKM B-1610 / KT).